The following is a 302-amino-acid chain: Tegument protein VP22 (302 aa).

Over residues 1–10 (MASSDGDRLC) the composition is skewed to basic and acidic residues. 2 disordered regions span residues 1–42 (MASS…PDDS) and 125–167 (SFTK…TATS). Residues 154–244 (RPISFSTAPK…ANEADLGEGA (91 aa)) are interaction with gE. The span at 157-167 (SFSTAPKTATS) shows a compositional bias: polar residues. The short motif at 212 to 224 (LDRLLTGAVIRIT) is the Nuclear export signal element. Positions 243 to 302 (GASVSKRGHNRKTGDLQGGMGNEPMYAQVRKPKSRTDTQTTGRITNRSRARSASRTDARK) are disordered.

It belongs to the alphaherpesvirinae VP22 tegument protein family. In terms of assembly, interacts with gE (via C-terminus); this interaction is necessary for the recruitment of VP22/ORF9 to the Golgi and its packaging into virions. Interacts with gM (via C-terminus). Interacts with VP16/ORF10; this interaction allows the formation of a tripartite complex composed of VP16/ORF10, VP22/ORF9 and VHS/ORF17. Interacts with the capsid-binding protein ORF44. Interacts with host CGAS. Post-translationally, highly phosphorylated in the host cell. Packaging is selective for underphosphorylated forms.

It is found in the virion tegument. Its subcellular location is the host cytoplasm. The protein resides in the host nucleus. The protein localises to the host Golgi apparatus. Functionally, tegument protein that plays different roles during the time course of infection. Participates in both the accumulation of viral mRNAs and viral protein translation at late time of infection. Modulates the RNase activity of the virion host shutoff protein ORF17 probably to ensure necessary levels of key cellular mRNAs and proteins. Plays a role in microtubule reorganization that occurs after viral infection by stabilizing microtubule network. Plays a role in the inhibition of host innate immune system by targeting the CGAS enzymatic activity which is the principal cytosolic DNA sensor that detects invading viral DNA. Acts by mediating disruption of liquid-like droplets in which CGAS is activated, thereby preventing CGAS activity. This chain is Tegument protein VP22, found in Varicella-zoster virus (strain Oka vaccine) (HHV-3).